The chain runs to 352 residues: Gap junction alpha-4 protein (352 aa).

Residues 2 to 23 (GDWEFLEKLLDQVQEHSTSIGK) are Cytoplasmic-facing. Residues 24 to 46 (IWLMVLFIFRILILGLAGESVWG) form a helical membrane-spanning segment. At 47-76 (DEQSDFTCNTEQPGCTNVCYDKAFPISHVR) the chain is on the extracellular side. The helical transmembrane segment at 77–99 (YWVLQFLFVSTPTLFYLGHVIYL) threads the bilayer. Residues 100-153 (SRKEEKLKQKESELRALDDKEQVEQAIAIIEKKKLKLYIQEDGTVKIKGALMYT) are Cytoplasmic-facing. The chain crosses the membrane as a helical span at residues 154 to 176 (YLTSVIFKSIFEAGFLLGQWYLY). Residues 177 to 208 (GFVMTPIYVCERVPCPHKVDCFVSRPMEKTIF) are Extracellular-facing. Residues 209–231 (IIFMLVVSLISLFLNVLELIHLI) traverse the membrane as a helical segment. The Cytoplasmic segment spans residues 232–352 (CKSMIHALKK…SSSASKKQYV (121 aa)). The disordered stretch occupies residues 332–352 (HSTVEKASTRASSSASKKQYV). The segment covering 340 to 352 (TRASSSASKKQYV) has biased composition (low complexity).

The protein belongs to the connexin family. Alpha-type (group II) subfamily. A connexon is composed of a hexamer of connexins. As to expression, expressed in ovarian somatic cells, heart, leg muscle, liver and eye but not in brain.

It is found in the cell membrane. The protein localises to the cell junction. The protein resides in the gap junction. In terms of biological role, one gap junction consists of a cluster of closely packed pairs of transmembrane channels, the connexons, through which materials of low MW diffuse from one cell to a neighboring cell. In Xenopus laevis (African clawed frog), this protein is Gap junction alpha-4 protein (gja4).